Reading from the N-terminus, the 317-residue chain is E3 ubiquitin-protein ligase NRDP1 (317 aa).

Residues 18 to 57 (CPICSGVLEEPVQAPHCEHAFCNACITQWFSQQQTCPVDR) form an RING-type; degenerate zinc finger. Positions 135–175 (IKHLRSVVQQQQIRIGELEKTAAESKHQLSEQKRDIQLLKA) form a coiled coil.

The enzyme catalyses S-ubiquitinyl-[E2 ubiquitin-conjugating enzyme]-L-cysteine + [acceptor protein]-L-lysine = [E2 ubiquitin-conjugating enzyme]-L-cysteine + N(6)-ubiquitinyl-[acceptor protein]-L-lysine.. It functions in the pathway protein modification; protein ubiquitination. Its function is as follows. Acts as E3 ubiquitin-protein ligase and regulates the degradation of target proteins. This is E3 ubiquitin-protein ligase NRDP1 (rnf41) from Xenopus laevis (African clawed frog).